The sequence spans 210 residues: MQQHLMQMQPMMAGYYPSNVTSDHIQQYLDENKSLILKIVESQNSGKLSECAENQARLQRNLMYLAAIADSQPQPPSVHSQYGSAGGGMIQGEGGSHYLQQQQATQQQQMTQQSLMAARSSMLYAQQQQQQQPYATLQHQQLHHSQLGMSSSSGGGGSSGLHILQGEAGGFHDFGRGKPEMGSGGGGEGRGGSSGDGGETLYLKSSDDGN.

A compositionally biased stretch (low complexity) spans 135–152 (ATLQHQQLHHSQLGMSSS). Positions 135–210 (ATLQHQQLHH…LYLKSSDDGN (76 aa)) are disordered. The span at 182–198 (GSGGGGEGRGGSSGDGG) shows a compositional bias: gly residues.

It belongs to the SS18 family. As to quaternary structure, interacts with GRF1, GRF2, GRF5 and GRF9. Strongly expressed in actively growing and developing tissues, such as roots, upper stems, and shoot tips and flower buds. Also expressed in mature flowers. Not expressed in the shoot apical meristem (SAM). Highly accumulated in the proximal part of leaf primordia, in the key proliferative zone at the junction region between the leaf blade and leaf petiole.

Transcription coactivator that plays a role in the regulation of cell expansion in leaf and cotyledons tissues. Component of a network formed by miR396, the GRFs and their interacting factors (GIFs) acting in the regulation of meristem function, at least partially through the control of cell proliferation. Appears to function synergistically with GRF1 as a transcriptional coactivator. Acts together with GRF5 for the development of appropriate leaf size and shape through the promotion and/or maintenance of cell proliferation activity in leaf primordia. Plays a role in adaxial/abaxial patterning and growth in leaf morphogenesis. GIFs are involved in the positive regulation of cell proliferation of lateral organs in a functionally redundant manner. Together with GATA18/HAN, mediates cotyledon identity by preventing ectopic root formation through the repression of PLT1 expression. The sequence is that of GRF1-interacting factor 1 from Arabidopsis thaliana (Mouse-ear cress).